The chain runs to 92 residues: RNA-binding protein Hfq (92 aa).

The 60-residue stretch at 9–68 (DPFLNALRRERVPVSVYLVNGIKLQGTIESFDQFVVLLRNTVSQMVYKHAISTVVPARNV) folds into the Sm domain. The disordered stretch occupies residues 73-92 (GGGYVQSNEGNQAEDDDVEQ).

This sequence belongs to the Hfq family. In terms of assembly, homohexamer.

Functionally, RNA chaperone that binds small regulatory RNA (sRNAs) and mRNAs to facilitate mRNA translational regulation in response to envelope stress, environmental stress and changes in metabolite concentrations. Also binds with high specificity to tRNAs. The protein is RNA-binding protein Hfq of Xanthomonas axonopodis pv. citri (strain 306).